We begin with the raw amino-acid sequence, 191 residues long: UPF0312 protein PA0423 (191 aa).

An N-terminal signal peptide occupies residues 1-23; it reads MLKKTLAALALGSALFTAGQAMA.

This sequence belongs to the UPF0312 family. Type 1 subfamily.

Its subcellular location is the periplasm. The chain is UPF0312 protein PA0423 from Pseudomonas aeruginosa (strain ATCC 15692 / DSM 22644 / CIP 104116 / JCM 14847 / LMG 12228 / 1C / PRS 101 / PAO1).